The sequence spans 351 residues: Glycerol-1-phosphate dehydrogenase [NAD(P)+] (351 aa).

NAD(+) is bound by residues 97-101 and 119-122; these read GTVID and TSPS. Substrate is bound at residue aspartate 124. Residue serine 128 participates in NAD(+) binding. Aspartate 171 lines the substrate pocket. The Zn(2+) site is built by aspartate 171 and histidine 251. Histidine 255 serves as a coordination point for substrate. Histidine 267 serves as a coordination point for Zn(2+).

The protein belongs to the glycerol-1-phosphate dehydrogenase family. Homodimer. Zn(2+) is required as a cofactor.

Its subcellular location is the cytoplasm. The enzyme catalyses sn-glycerol 1-phosphate + NAD(+) = dihydroxyacetone phosphate + NADH + H(+). The catalysed reaction is sn-glycerol 1-phosphate + NADP(+) = dihydroxyacetone phosphate + NADPH + H(+). It functions in the pathway membrane lipid metabolism; glycerophospholipid metabolism. In terms of biological role, catalyzes the NAD(P)H-dependent reduction of dihydroxyacetonephosphate (DHAP or glycerone phosphate) to glycerol 1-phosphate (G1P). The G1P thus generated is used as the glycerophosphate backbone of phospholipids in the cellular membranes of Archaea. The polypeptide is Glycerol-1-phosphate dehydrogenase [NAD(P)+] (Sulfolobus acidocaldarius (strain ATCC 33909 / DSM 639 / JCM 8929 / NBRC 15157 / NCIMB 11770)).